A 182-amino-acid chain; its full sequence is CDP-diacylglycerol--glycerol-3-phosphate 3-phosphatidyltransferase (182 aa).

The Cytoplasmic segment spans residues 1-12; the sequence is MQLNIPTWLTLF. Residues 13 to 37 traverse the membrane as a helical segment; sequence RVVLIPFFVLAFYLPFVWAPMVCAI. Residues 38–60 are Periplasmic-facing; it reads IFVFAAATDWFDGFLARRWKQTT. Residues 61-81 form a helical membrane-spanning segment; sequence RFGAFLDPVADKVMVAIALVL. At 82-86 the chain is on the cytoplasmic side; the sequence is VAEHY. The helical transmembrane segment at 87-107 threads the bilayer; sequence HVWWITLPAATMIAREIIISS. Residues 108 to 145 lie on the Periplasmic side of the membrane; sequence LREWMAEIGKRSSVAVSWIGKVKTTAQMGSLVGLLWRP. A helical membrane pass occupies residues 146-168; the sequence is DHNIELASFVLLYIAAVLTFWSM. The Cytoplasmic segment spans residues 169–181; the sequence is FQYLNAAWKDLLE.

The protein belongs to the CDP-alcohol phosphatidyltransferase class-I family.

The protein localises to the cell inner membrane. It carries out the reaction a CDP-1,2-diacyl-sn-glycerol + sn-glycerol 3-phosphate = a 1,2-diacyl-sn-glycero-3-phospho-(1'-sn-glycero-3'-phosphate) + CMP + H(+). Its pathway is phospholipid metabolism; phosphatidylglycerol biosynthesis; phosphatidylglycerol from CDP-diacylglycerol: step 1/2. Functionally, catalyzes the conversion of cytidine diphosphate diacylglycerol (CDP-DG) and glycerol 3-phosphate into phosphatidylglycerol. Essential for the synthesis of anionic phospholipids, thereby playing a role in balancing the ratio of zwitterionic and anionic phospholipids, which is thought to be important for normal membrane function. This Yersinia enterocolitica serotype O:8 / biotype 1B (strain NCTC 13174 / 8081) protein is CDP-diacylglycerol--glycerol-3-phosphate 3-phosphatidyltransferase.